We begin with the raw amino-acid sequence, 694 residues long: Lon-like protease BrxL (694 aa).

This sequence belongs to the BrxL family.

In terms of biological role, BREX systems (bacteriophage exclusion) provide immunity against bacteriophage. Part of a type 1 BREX system which protects against dsDNA phage. This system allows phage adsorption but prevents phage DNA replication, without degradation of the phage DNA. Methylation of bacterial DNA by PglX guides self/non-self discrimination. When the brxA-brxB-brxC-pglX-pglZ-brxL genes are transformed into a susceptible E.coli strain (BW25113) they confer very high resistance to infection by bacteriophage VR7 and VpaE1, about 100-fold protection against lambda, T5 and T7 and no protection against RNA phage Qbeta, ssDNA phage M13 or dSDNA phage T4 and VR5. Glycosylated phage DNA is not susceptible to BREX. The BREX system does not confer resistance to lysogenic lambda phage, i.e. prophage that are integrated into the chromosomal DNA and then induced to form phage. Expression of this protein alone is toxic. The sequence is that of Lon-like protease BrxL from Escherichia coli O9:H4 (strain HS).